Here is a 185-residue protein sequence, read N- to C-terminus: Ribosome-recycling factor (185 aa).

This sequence belongs to the RRF family.

Its subcellular location is the cytoplasm. In terms of biological role, responsible for the release of ribosomes from messenger RNA at the termination of protein biosynthesis. May increase the efficiency of translation by recycling ribosomes from one round of translation to another. The sequence is that of Ribosome-recycling factor from Dichelobacter nodosus (strain VCS1703A).